Consider the following 399-residue polypeptide: Transcription factor UNE10 (399 aa).

2 disordered regions span residues 119–158 and 173–228; these read QSKPGGVGSTRVGSCSDGRTMGGGKRARVAPEWSGGGSQR and MGSH…RRDK. Over residues 178 to 201 the composition is skewed to basic and acidic residues; that stretch reads NTIDDHDSVCHSRPQMEDEEEKKA. One can recognise a bHLH domain in the interval 213–262; sequence RAAAIHNQSERKRRDKINQRMKTLQKLVPNSSKTDKASMLDEVIEYLKQL.

In terms of assembly, homodimer. Associates to PTAC12/HMR/PAP5 which acts as a transcriptional coactivator. Interacts with the Pfr form of phyB but barely with that of phyA. Binds to COP1. In terms of processing, ubiquitinated and subsequently targeted to protein degradation by COP1 in the dark, but not in far-red light. Mainly expressed in stems, leaves, seedlings, fruits and flowers, and, to a lower extent, in roots.

It localises to the nucleus. Its activity is regulated as follows. Stabilized by phyA but destabilized by phyB. Accumulates in the dark but not in far-red light upon MG132 treatment, a 26S proteasome inhibitor (at protein level). In terms of biological role, transcription factor binding to G-box elements (5'-CACGTG-3') in target genes promoters, particularly in far-red light but barely in the dark. Required during the fertilization of ovules by pollen. Repressor of phytochrome A-mediated far-red light responses including seed germination, suppression of hypocotyl elongation, and randomization of hypocotyl growth orientation. Does not inhibit phyB-induced red light responses. In Arabidopsis thaliana (Mouse-ear cress), this protein is Transcription factor UNE10.